The chain runs to 308 residues: Ribosomal RNA large subunit methyltransferase F (308 aa).

It belongs to the methyltransferase superfamily. METTL16/RlmF family.

It is found in the cytoplasm. It catalyses the reaction adenosine(1618) in 23S rRNA + S-adenosyl-L-methionine = N(6)-methyladenosine(1618) in 23S rRNA + S-adenosyl-L-homocysteine + H(+). In terms of biological role, specifically methylates the adenine in position 1618 of 23S rRNA. This chain is Ribosomal RNA large subunit methyltransferase F, found in Escherichia coli (strain SMS-3-5 / SECEC).